A 413-amino-acid chain; its full sequence is MTAAGFNSILCLRQLVRLNRRQYSAPAKSVLSGSQTNDQATPPPTSKSADKMRGWQLHNYGDIDELQLSEMLKIPQIRCSNECLVRIRATAVNPIDLAMLRGYGATVLNKMRCQPGDGIEFPLILGREFCGELVQTGMGVSLPLGSRVWGVVPLQATIGSHAEYVAVPSYCLAPAPKELDDYEAASVLYAGLTAWSGLYITGGLGGPCGATTASGGGAHKRVLVLGGSGGVGTLAIQILKSQKVQVLATCSENAIEMVRNLGADLVVDYNNPQAMEELCKYAPYDIVLDCAGQGGQKAAESKYDFRQYITFSSPLLANIDKQGLGVGALKNVFDLFQTNVRSVTQRGGLVKWGFFSPAPQGIQFLQKLVEQRKLMPLIDSSYGFSELPKAFEKMKSGHLRGKIVVKLREETGD.

Residues 1-23 constitute a mitochondrion transit peptide; the sequence is MTAAGFNSILCLRQLVRLNRRQY. The interval 27 to 52 is disordered; the sequence is AKSVLSGSQTNDQATPPPTSKSADKM. The span at 31–40 shows a compositional bias: polar residues; that stretch reads LSGSQTNDQA. The region spanning 61–405 is the Enoyl reductase (ER) domain; it reads GDIDELQLSE…SGHLRGKIVV (345 aa). 9 residues coordinate NADPH: S228, G230, V231, S251, Y269, G353, F355, H398, and R400.

Belongs to the zinc-containing alcohol dehydrogenase family. Quinone oxidoreductase subfamily.

The protein resides in the mitochondrion matrix. It catalyses the reaction a quinone + NADH + H(+) = a quinol + NAD(+). The enzyme catalyses a quinone + NADPH + H(+) = a quinol + NADP(+). The protein operates within cofactor biosynthesis; ubiquinone biosynthesis. NAD(P)H oxidoreductase. Involved in the ubiquinone biosynthetic pathway. This is NAD(P)H oxidoreductase RTN4IP1, mitochondrial from Drosophila melanogaster (Fruit fly).